Reading from the N-terminus, the 397-residue chain is 1-carboxy-3-chloro-3,4-dihydroxycyclo hexa-1,5-diene dehydrogenase (397 aa).

To P.putida PHT4.

The chain is 1-carboxy-3-chloro-3,4-dihydroxycyclo hexa-1,5-diene dehydrogenase (cbaC) from Comamonas testosteroni (Pseudomonas testosteroni).